Here is a 548-residue protein sequence, read N- to C-terminus: Biotin-dependent acetyl-/propionyl-coenzyme A carboxylase beta5 subunit (548 aa).

The tract at residues 1–23 (MTSVTDRSAHSAERSTEHTIDIH) is disordered. The span at 7–21 (RSAHSAERSTEHTID) shows a compositional bias: basic and acidic residues. The 257-residue stretch at 25–281 (TAGKLAELHK…NNSTDAPRYQ (257 aa)) folds into the CoA carboxyltransferase N-terminal domain. The 247-residue stretch at 295-541 (DEDLELDTLI…ERKIAQLPPK (247 aa)) folds into the CoA carboxyltransferase C-terminal domain.

This sequence belongs to the AccD/PCCB family. As to quaternary structure, forms homohexamers. The biotin-dependent acyl-CoA carboxylase complex is composed of AccA3, which contains the biotin carboxylase (BC) and biotin carboxyl carrier protein (BCCP) domains, and AccD5, which contains the carboxyl transferase (CT) domain. The AccA3/AccD5 complex forms a dodecamer, and can associate with the epsilon subunit AccE5 (Rv3280), which stimulates carboxylation by the complex. Is also part of the long-chain acyl-CoA carboxylase (LCC) complex, which is composed of AccA3, AccD4, AccD5 and AccE5. The four subunits are essential for activity, but AccD5, together with AccE5, probably plays a structural role rather than a catalytic one.

It catalyses the reaction N(6)-carboxybiotinyl-L-lysyl-[protein] + acetyl-CoA = N(6)-biotinyl-L-lysyl-[protein] + malonyl-CoA. It carries out the reaction N(6)-carboxybiotinyl-L-lysyl-[protein] + propanoyl-CoA = methylmalonyl-CoA + N(6)-biotinyl-L-lysyl-[protein]. The protein operates within lipid metabolism; mycolic acid biosynthesis. With respect to regulation, carboxylase activity of the AccA3/AccD5 complex is stimulated by interaction with AccE5. Functionally, component of a biotin-dependent acyl-CoA carboxylase complex. This subunit transfers the CO2 from carboxybiotin to the CoA ester substrate. When associated with the alpha3 subunit AccA3, is involved in the carboxylation of acetyl-CoA and propionyl-CoA, with a preference for propionyl-CoA. Is also required for the activity of the long-chain acyl-CoA carboxylase (LCC) complex. The chain is Biotin-dependent acetyl-/propionyl-coenzyme A carboxylase beta5 subunit from Mycobacterium tuberculosis (strain ATCC 25618 / H37Rv).